The chain runs to 658 residues: Endoplasmic reticulum chaperone BiP (658 aa).

The N-terminal stretch at Met-1–Ala-19 is a signal peptide. ATP-binding positions include Gly-38–Tyr-41, Lys-98, Gly-228–Thr-230, Glu-294–Ser-301, and Gly-365–Arg-368. The tract at residues Lys-127–Ala-281 is nucleotide-binding (NBD). Residues Gln-410–Val-420 form an interdomain linker region. Residues Cys-421–Thr-501 are substrate-binding (SBD). Residues Lys-634 to Leu-658 are disordered. The segment covering Glu-648–Leu-658 has biased composition (acidic residues). Positions Lys-655–Leu-658 match the Prevents secretion from ER motif.

It belongs to the heat shock protein 70 family. Monomer and homooligomer; homooligomerization via the interdomain linker inactivates the chaperone activity and acts as a storage of hspa5/BiP molecules. Interacts with DNAJC10. Interacts with dnajb9/ERdj4; leading to recruit hspa5/BiP to ern1/ire1. Interacts with ern1/ire1; interaction takes place following interaction with dnajb9/ERdj4 and leads to inactivate ern1/IRE1.

Its subcellular location is the endoplasmic reticulum lumen. It catalyses the reaction ATP + H2O = ADP + phosphate + H(+). With respect to regulation, the chaperone activity is regulated by ATP-induced allosteric coupling of the nucleotide-binding (NBD) and substrate-binding (SBD) domains. In the ADP-bound and nucleotide-free (apo) states, the two domains have little interaction. In contrast, in the ATP-bound state the two domains are tightly coupled, which results in drastically accelerated kinetics in both binding and release of polypeptide substrates. J domain-containing co-chaperones (dnajb9/ERdj4 or dnajc10/ERdj5) stimulate the ATPase activity and are required for efficient substrate recognition by hspa5/BiP. Homooligomerization inactivates participating hspa5/BiP protomers and probably act as reservoirs to store hspa5/BiP molecules when they are not needed by the cell. Its function is as follows. Endoplasmic reticulum chaperone that plays a key role in protein folding and quality control in the endoplasmic reticulum lumen. Involved in the correct folding of proteins and degradation of misfolded proteins via its interaction with dnajc10/ERdj5, probably to facilitate the release of dnajc10/ERdj5 from its substrate. Acts as a key repressor of the EIF2AK3/PERK and ERN1/IRE1-mediated unfolded protein response (UPR). In the unstressed endoplasmic reticulum, recruited by DNAJB9/ERdj4 to the luminal region of ERN1/IRE1, leading to disrupt the dimerization of ERN1/IRE1, thereby inactivating ERN1/IRE1. Also binds and inactivates EIF2AK3/PERK in unstressed cells. Accumulation of misfolded protein in the endoplasmic reticulum causes release of HSPA5/BiP from ERN1/IRE1 and EIF2AK3/PERK, allowing their homodimerization and subsequent activation. The sequence is that of Endoplasmic reticulum chaperone BiP from Xenopus laevis (African clawed frog).